Consider the following 173-residue polypeptide: Protein FAM180A (173 aa).

The signal sequence occupies residues 1-17 (MHWKMLLLLLLYYNAEA).

This sequence belongs to the FAM180 family.

The protein localises to the secreted. In Homo sapiens (Human), this protein is Protein FAM180A (FAM180A).